Consider the following 318-residue polypeptide: Ankyrin repeat and SOCS box protein 7 (318 aa).

ANK repeat units follow at residues 13-42 (QEELQIQAAVAAGDVHTVRKMLEQGYSPNG), 46-75 (NGWTLLHFSAARGKERCVRVFLEHGADPTV), 80-109 (GGFTALHYAAMHGRARIARLMLESEYRSDI), 116-145 (DGWTPLHVAAHYGRDSFVRLLLEFKAEVDP), 149-178 (KGTTPLQLAIIRERSSCVKILLDHNANIDI), 180-208 (NGFLLRYAVIKSNHSYCRMFLQRGADTNL), and 213-242 (DGQTPLHLSALRDDVLCARMLYNYGADTNT). Positions 265–318 (LDFLQEVTRQPRNLQDLCRIKIRQCIGLQNLKLLDELPIAKVMKDYLKHKFDDI) constitute an SOCS box domain.

This sequence belongs to the ankyrin SOCS box (ASB) family. Interacts with CUL5. Interacts with RNF7. Interacts with PSRC1.

It participates in protein modification; protein ubiquitination. Probable substrate-recognition component of a SCF-like ECS (Elongin-Cullin-SOCS-box protein) E3 ubiquitin-protein ligase complex which mediates the ubiquitination and subsequent proteasomal degradation of target proteins. Plays a role in spindle dynamics and genome integrity by targeting the mitotic progression protein PSRC1 for proteasomal degradation in a cell cycle-dependent manner. Also participates in meiosis by mediating the proper attachment between kinetochores and microtubules. The chain is Ankyrin repeat and SOCS box protein 7 (ASB7) from Homo sapiens (Human).